A 424-amino-acid chain; its full sequence is Enolase (424 aa).

Gln163 lines the (2R)-2-phosphoglycerate pocket. Glu205 acts as the Proton donor in catalysis. Positions 242, 285, and 312 each coordinate Mg(2+). Residues Lys337, Arg366, Ser367, and Lys388 each contribute to the (2R)-2-phosphoglycerate site. Catalysis depends on Lys337, which acts as the Proton acceptor.

Belongs to the enolase family. It depends on Mg(2+) as a cofactor.

The protein resides in the cytoplasm. The protein localises to the secreted. It localises to the cell surface. It carries out the reaction (2R)-2-phosphoglycerate = phosphoenolpyruvate + H2O. The protein operates within carbohydrate degradation; glycolysis; pyruvate from D-glyceraldehyde 3-phosphate: step 4/5. Catalyzes the reversible conversion of 2-phosphoglycerate (2-PG) into phosphoenolpyruvate (PEP). It is essential for the degradation of carbohydrates via glycolysis. This chain is Enolase, found in Dinoroseobacter shibae (strain DSM 16493 / NCIMB 14021 / DFL 12).